Reading from the N-terminus, the 500-residue chain is NAD(P)H-quinone oxidoreductase chain 4, chloroplastic (500 aa).

14 consecutive transmembrane segments (helical) span residues 4–24 (FPWL…IFFL), 37–57 (ISIC…HFQL), 87–107 (LGSI…AWPI), 113–130 (LFYF…GLFS), 134–154 (LLLF…LLSM), 167–187 (FILY…GMGL), 211–231 (ILLY…IPLH), 242–262 (HYST…YGLI), 272–292 (AHYL…IYAA), 313–333 (MGFI…GAIL), 334–354 (QILS…TASD), 386–406 (LALP…GLIT), 417–437 (LITF…LSML), and 462–482 (LFIL…PDFV).

This sequence belongs to the complex I subunit 4 family.

The protein resides in the plastid. It localises to the chloroplast thylakoid membrane. The catalysed reaction is a plastoquinone + NADH + (n+1) H(+)(in) = a plastoquinol + NAD(+) + n H(+)(out). It carries out the reaction a plastoquinone + NADPH + (n+1) H(+)(in) = a plastoquinol + NADP(+) + n H(+)(out). This chain is NAD(P)H-quinone oxidoreductase chain 4, chloroplastic (ndhD), found in Triticum aestivum (Wheat).